A 349-amino-acid polypeptide reads, in one-letter code: Phenylalanine--tRNA ligase alpha subunit (349 aa).

Glu-258 contacts Mg(2+).

This sequence belongs to the class-II aminoacyl-tRNA synthetase family. Phe-tRNA synthetase alpha subunit type 1 subfamily. As to quaternary structure, tetramer of two alpha and two beta subunits. Mg(2+) serves as cofactor.

It is found in the cytoplasm. It carries out the reaction tRNA(Phe) + L-phenylalanine + ATP = L-phenylalanyl-tRNA(Phe) + AMP + diphosphate + H(+). The polypeptide is Phenylalanine--tRNA ligase alpha subunit (Rickettsia felis (strain ATCC VR-1525 / URRWXCal2) (Rickettsia azadi)).